A 121-amino-acid chain; its full sequence is Small ribosomal subunit protein uS13 (121 aa).

Residues lysine 93 to lysine 121 are disordered.

It belongs to the universal ribosomal protein uS13 family. As to quaternary structure, part of the 30S ribosomal subunit. Forms a loose heterodimer with protein S19. Forms two bridges to the 50S subunit in the 70S ribosome.

Functionally, located at the top of the head of the 30S subunit, it contacts several helices of the 16S rRNA. In the 70S ribosome it contacts the 23S rRNA (bridge B1a) and protein L5 of the 50S subunit (bridge B1b), connecting the 2 subunits; these bridges are implicated in subunit movement. Contacts the tRNAs in the A and P-sites. The sequence is that of Small ribosomal subunit protein uS13 from Clostridium perfringens (strain ATCC 13124 / DSM 756 / JCM 1290 / NCIMB 6125 / NCTC 8237 / Type A).